The chain runs to 349 residues: uncharacterized protein (349 aa).

The N-terminal stretch at 1 to 25 (MNKYIKQGAPILGILLAVMFGGREG) is a signal peptide.

The protein belongs to the bacterial solute-binding protein 1 family. WtpA subfamily.

This is an uncharacterized protein from Methanococcus aeolicus (strain ATCC BAA-1280 / DSM 17508 / OCM 812 / Nankai-3).